A 328-amino-acid chain; its full sequence is Malate dehydrogenase 1 (328 aa).

12–18 serves as a coordination point for NAD(+); it reads GAAGQIG. 2 residues coordinate substrate: Arg-95 and Arg-101. NAD(+)-binding positions include Asn-108, Gln-115, and 132–134; that span reads VGN. Asn-134 and Arg-165 together coordinate substrate. His-190 (proton acceptor) is an active-site residue.

This sequence belongs to the LDH/MDH superfamily. MDH type 2 family.

It catalyses the reaction (S)-malate + NAD(+) = oxaloacetate + NADH + H(+). In terms of biological role, catalyzes the reversible oxidation of malate to oxaloacetate. In Albidiferax ferrireducens (strain ATCC BAA-621 / DSM 15236 / T118) (Rhodoferax ferrireducens), this protein is Malate dehydrogenase 1.